We begin with the raw amino-acid sequence, 172 residues long: Trypsin inhibitor 1B (172 aa).

2 cysteine pairs are disulfide-bonded: C40–C84 and C133–C139.

Belongs to the protease inhibitor I3 (leguminous Kunitz-type inhibitor) family.

Functionally, WTI-1B inhibits trypsin stoichiometrically. The chain is Trypsin inhibitor 1B from Psophocarpus tetragonolobus (Winged bean).